We begin with the raw amino-acid sequence, 206 residues long: Large ribosomal subunit protein uL3 (206 aa).

Residues 127–151 (SGGPSSHGSKFHRHLGGTGQATTPA) form a disordered region.

The protein belongs to the universal ribosomal protein uL3 family. In terms of assembly, part of the 50S ribosomal subunit. Forms a cluster with proteins L14 and L19.

In terms of biological role, one of the primary rRNA binding proteins, it binds directly near the 3'-end of the 23S rRNA, where it nucleates assembly of the 50S subunit. The protein is Large ribosomal subunit protein uL3 of Borreliella afzelii (strain PKo) (Borrelia afzelii).